Consider the following 100-residue polypeptide: NADH-quinone oxidoreductase subunit K (100 aa).

A run of 3 helical transmembrane segments spans residues 3–23 (LNAY…GIFL), 29–49 (ISIM…FVAF), and 60–80 (IFTF…LAIL).

The protein belongs to the complex I subunit 4L family. As to quaternary structure, NDH-1 is composed of 14 different subunits. Subunits NuoA, H, J, K, L, M, N constitute the membrane sector of the complex.

It is found in the cell inner membrane. The catalysed reaction is a quinone + NADH + 5 H(+)(in) = a quinol + NAD(+) + 4 H(+)(out). In terms of biological role, NDH-1 shuttles electrons from NADH, via FMN and iron-sulfur (Fe-S) centers, to quinones in the respiratory chain. The immediate electron acceptor for the enzyme in this species is believed to be ubiquinone. Couples the redox reaction to proton translocation (for every two electrons transferred, four hydrogen ions are translocated across the cytoplasmic membrane), and thus conserves the redox energy in a proton gradient. The chain is NADH-quinone oxidoreductase subunit K from Magnetococcus marinus (strain ATCC BAA-1437 / JCM 17883 / MC-1).